The primary structure comprises 199 residues: Octanoyltransferase (199 aa).

Positions 27 to 199 (SNSCDELWLL…FVQYFLTQFK (173 aa)) constitute a BPL/LPL catalytic domain. Residues 66 to 73 (RGGQVTYH), 133 to 135 (SIG), and 146 to 148 (GIA) contribute to the substrate site. Cysteine 164 functions as the Acyl-thioester intermediate in the catalytic mechanism.

It belongs to the LipB family.

It is found in the cytoplasm. The enzyme catalyses octanoyl-[ACP] + L-lysyl-[protein] = N(6)-octanoyl-L-lysyl-[protein] + holo-[ACP] + H(+). The protein operates within protein modification; protein lipoylation via endogenous pathway; protein N(6)-(lipoyl)lysine from octanoyl-[acyl-carrier-protein]: step 1/2. Catalyzes the transfer of endogenously produced octanoic acid from octanoyl-acyl-carrier-protein onto the lipoyl domains of lipoate-dependent enzymes. Lipoyl-ACP can also act as a substrate although octanoyl-ACP is likely to be the physiological substrate. The protein is Octanoyltransferase of Legionella pneumophila (strain Paris).